A 152-amino-acid chain; its full sequence is Ribosome maturation factor RimP (152 aa).

This sequence belongs to the RimP family.

It is found in the cytoplasm. In terms of biological role, required for maturation of 30S ribosomal subunits. The protein is Ribosome maturation factor RimP of Porphyromonas gingivalis (strain ATCC 33277 / DSM 20709 / CIP 103683 / JCM 12257 / NCTC 11834 / 2561).